The sequence spans 548 residues: Membrane protein insertase YidC (548 aa).

The helical transmembrane segment at 6–26 threads the bilayer; sequence NLLVIALLFVSFMIWQAWEQD. The segment at 28-55 is disordered; sequence NPQPQAQQTTQTTTTAAGSAADQGVPAS. The segment covering 30–50 has biased composition (low complexity); the sequence is QPQAQQTTQTTTTAAGSAADQ. The next 4 membrane-spanning stretches (helical) occupy residues 350–370, 420–440, 458–478, and 499–519; these read FVGN…GIMY, LGGC…YYML, LSAQ…MFFI, and PVIF…YYIV.

This sequence belongs to the OXA1/ALB3/YidC family. Type 1 subfamily. As to quaternary structure, interacts with the Sec translocase complex via SecD. Specifically interacts with transmembrane segments of nascent integral membrane proteins during membrane integration.

The protein localises to the cell inner membrane. Required for the insertion and/or proper folding and/or complex formation of integral membrane proteins into the membrane. Involved in integration of membrane proteins that insert both dependently and independently of the Sec translocase complex, as well as at least some lipoproteins. Aids folding of multispanning membrane proteins. In Shigella dysenteriae serotype 1 (strain Sd197), this protein is Membrane protein insertase YidC.